The chain runs to 209 residues: Protein GrpE (209 aa).

Residues 1–13 show a composition bias toward polar residues; the sequence is MSNDSSKAKQNQV. The disordered stretch occupies residues 1 to 33; sequence MSNDSSKAKQNQVDEAVEGEILTESEVETGNDE. Residues 15–31 show a composition bias toward acidic residues; it reads EAVEGEILTESEVETGN.

This sequence belongs to the GrpE family. As to quaternary structure, homodimer.

The protein resides in the cytoplasm. In terms of biological role, participates actively in the response to hyperosmotic and heat shock by preventing the aggregation of stress-denatured proteins, in association with DnaK and GrpE. It is the nucleotide exchange factor for DnaK and may function as a thermosensor. Unfolded proteins bind initially to DnaJ; upon interaction with the DnaJ-bound protein, DnaK hydrolyzes its bound ATP, resulting in the formation of a stable complex. GrpE releases ADP from DnaK; ATP binding to DnaK triggers the release of the substrate protein, thus completing the reaction cycle. Several rounds of ATP-dependent interactions between DnaJ, DnaK and GrpE are required for fully efficient folding. In Shewanella woodyi (strain ATCC 51908 / MS32), this protein is Protein GrpE.